A 474-amino-acid chain; its full sequence is PRAME family member 7 (474 aa).

The stretch at 97-122 is one LRR 1; degenerate repeat; that stretch reads QSKLQVLDLRNVDENFCDIFSGATAS. The LRR 2; degenerate repeat unit spans residues 177 to 201; sequence HVCCKELQVFGMPIHSIIEVLNMVE. The stretch at 202–228 is one LRR 3; degenerate repeat; sequence LDCIQEVEVCCPWELSTLVKFAPYLGQ. The stretch at 229-264 is one LRR 4; degenerate repeat; sequence MRNLRKLVLFNIRASACIPPDNKGQFIARFTSQFLK. 5 LRR repeats span residues 265–290, 291–322, 323–341, 347–374, and 375–399; these read LDYF…LRCL, QASL…RQLK, ELDL…PLTG, VATL…VLSR, and CSQL…LLRH.

The protein belongs to the PRAME family.

The polypeptide is PRAME family member 7 (Homo sapiens (Human)).